A 366-amino-acid polypeptide reads, in one-letter code: Autophagy-related protein 18b (366 aa).

3 WD repeats span residues 6–44 (SLPSPIYCVSFNQDNSGFAISWKDSFKIFDSTTGRLCYE), 178–218 (AHRS…KSYS), and 223–265 (TYPS…NQRS).

It belongs to the WD repeat PROPPIN family. As to quaternary structure, component of the PI(3,5)P2 regulatory complex at least composed of ATG18, SAC/FIG4, FAB1 and VAC14. In terms of tissue distribution, expressed in roots, stems, flowers and leaves.

Its subcellular location is the preautophagosomal structure membrane. It localises to the vacuole membrane. Functionally, the PI(3,5)P2 regulatory complex regulates both the synthesis and turnover of phosphatidylinositol 3,5-bisphosphate (PtdIns(3,5)P2). Required for autophagy. The protein is Autophagy-related protein 18b (ATG18B) of Arabidopsis thaliana (Mouse-ear cress).